The sequence spans 282 residues: Homeobox protein Hox-C12 (282 aa).

Disordered stretches follow at residues 94 to 129 (YYREPCAEGGGGGLKREERGRDPGAGPGAALLPLEP) and 147 to 214 (GGDG…NSRS). Residues 162-175 (SCQSLESDSSSSLL) show a composition bias toward low complexity. A DNA-binding region (homeobox) is located at residues 214–273 (SRKKRKPYSKLQLAELEGEFLVNEFITRQRRRELSDRLNLSDQQVKIWFQNRRMKKKRLL).

This sequence belongs to the Abd-B homeobox family.

The protein resides in the nucleus. In terms of biological role, sequence-specific transcription factor which is part of a developmental regulatory system that provides cells with specific positional identities on the anterior-posterior axis. The chain is Homeobox protein Hox-C12 (HOXC12) from Homo sapiens (Human).